We begin with the raw amino-acid sequence, 156 residues long: MSRKNRAPKREVLADPLYNSKIVTRLINRVMLDGKRGTAATIVYDAFEQIKEATGNDALEVFETAMDNIMPVLEVRARRVGGSNYQVPVEVRPERRITLGLRWLVNASRARGEHTMKERLAKEIMDAANNTGAAVKKREDTHKMAEANRAFAHFRW.

The protein belongs to the universal ribosomal protein uS7 family. In terms of assembly, part of the 30S ribosomal subunit. Contacts proteins S9 and S11.

In terms of biological role, one of the primary rRNA binding proteins, it binds directly to 16S rRNA where it nucleates assembly of the head domain of the 30S subunit. Is located at the subunit interface close to the decoding center, probably blocks exit of the E-site tRNA. In Streptococcus thermophilus (strain CNRZ 1066), this protein is Small ribosomal subunit protein uS7.